The sequence spans 229 residues: 2-C-methyl-D-erythritol 4-phosphate cytidylyltransferase (229 aa).

This sequence belongs to the IspD/TarI cytidylyltransferase family. IspD subfamily.

The catalysed reaction is 2-C-methyl-D-erythritol 4-phosphate + CTP + H(+) = 4-CDP-2-C-methyl-D-erythritol + diphosphate. Its pathway is isoprenoid biosynthesis; isopentenyl diphosphate biosynthesis via DXP pathway; isopentenyl diphosphate from 1-deoxy-D-xylulose 5-phosphate: step 2/6. Functionally, catalyzes the formation of 4-diphosphocytidyl-2-C-methyl-D-erythritol from CTP and 2-C-methyl-D-erythritol 4-phosphate (MEP). The sequence is that of 2-C-methyl-D-erythritol 4-phosphate cytidylyltransferase from Neisseria meningitidis serogroup A / serotype 4A (strain DSM 15465 / Z2491).